Here is a 359-residue protein sequence, read N- to C-terminus: DNA replication and repair protein RecF (359 aa).

30 to 37 contacts ATP; that stretch reads GNNGSGKT.

The protein belongs to the RecF family.

It is found in the cytoplasm. In terms of biological role, the RecF protein is involved in DNA metabolism; it is required for DNA replication and normal SOS inducibility. RecF binds preferentially to single-stranded, linear DNA. It also seems to bind ATP. The chain is DNA replication and repair protein RecF from Haemophilus influenzae (strain 86-028NP).